The primary structure comprises 433 residues: Serine--tRNA ligase (433 aa).

T235 to E237 contacts L-serine. R266–E268 is a binding site for ATP. An L-serine-binding site is contributed by E289. E353 to S356 contributes to the ATP binding site. S388 is an L-serine binding site.

The protein belongs to the class-II aminoacyl-tRNA synthetase family. Type-1 seryl-tRNA synthetase subfamily. Homodimer. The tRNA molecule binds across the dimer.

The protein resides in the cytoplasm. It catalyses the reaction tRNA(Ser) + L-serine + ATP = L-seryl-tRNA(Ser) + AMP + diphosphate + H(+). The enzyme catalyses tRNA(Sec) + L-serine + ATP = L-seryl-tRNA(Sec) + AMP + diphosphate + H(+). Its pathway is aminoacyl-tRNA biosynthesis; selenocysteinyl-tRNA(Sec) biosynthesis; L-seryl-tRNA(Sec) from L-serine and tRNA(Sec): step 1/1. Its function is as follows. Catalyzes the attachment of serine to tRNA(Ser). Is also able to aminoacylate tRNA(Sec) with serine, to form the misacylated tRNA L-seryl-tRNA(Sec), which will be further converted into selenocysteinyl-tRNA(Sec). This is Serine--tRNA ligase from Burkholderia ambifaria (strain MC40-6).